A 501-amino-acid polypeptide reads, in one-letter code: Putative matrix metalloproteinase (501 aa).

An N-terminal signal peptide occupies residues 1 to 26 (MMPQYERKQIIIHISCVIICVVVTLT). N-linked (GlcNAc...) asparagine; by host glycosylation is found at Asn48, Asn58, Asn61, Asn94, Asn116, and Asn163. His179 provides a ligand contact to Zn(2+). The active site involves Glu180. Positions 183 and 189 each coordinate Zn(2+). 4 N-linked (GlcNAc...) asparagine; by host glycosylation sites follow: Asn192, Asn267, Asn280, and Asn291. Residues 311–356 (TGHIDTISVIRGELYIFVDEYHWRFRSNGLLYSGYPLKTTHSWSVP) form a Hemopexin repeat. 2 N-linked (GlcNAc...) asparagine; by host glycosylation sites follow: Asn379 and Asn493.

It belongs to the peptidase M10A family. Zn(2+) is required as a cofactor.

The protein is Putative matrix metalloproteinase of Trichoplusia ni ascovirus 2c (TnAV-2c).